Consider the following 457-residue polypeptide: Aromatic amino acid transport protein AroP (457 aa).

Residues 1–18 (MMEGQQHGEQLKRGLKNR) lie on the Cytoplasmic side of the membrane. Residues 19–39 (HIQLIALGGAIGTGLFLGSAS) form a helical membrane-spanning segment. The Periplasmic portion of the chain corresponds to 40–42 (VIQ). Residues 43–63 (SAGPGIILGYAIAGFIAFLIM) form a helical membrane-spanning segment. Over 64-98 (RQLGEMVVEEPVAGSFSHFAYKYWGSFAGFASGWN) the chain is Cytoplasmic. A helical transmembrane segment spans residues 99-119 (YWVLYVLVAMAELTAVGKYIQ). Residues 120-124 (FWYPE) are Periplasmic-facing. A helical membrane pass occupies residues 125 to 145 (IPTWVSAAVFFVVINAINLTN). The Cytoplasmic segment spans residues 146–147 (VK). Residues 148–168 (VFGEMEFWFAIIKVIAVVAMI) form a helical membrane-spanning segment. Topologically, residues 169 to 192 (IFGGWLLFSGNGGPQATVSNLWDQ) are periplasmic. Residues 193–213 (GGFLPHGFTGLVMMMAIIMFS) traverse the membrane as a helical segment. Topologically, residues 214-239 (FGGLELVGITAAEADNPEQSIPKATN) are cytoplasmic. The chain crosses the membrane as a helical span at residues 240-260 (QVIYRILIFYIGSLAVLLSLM). The Periplasmic segment spans residues 261–279 (PWTRVTADTSPFVLIFHEL). The chain crosses the membrane as a helical span at residues 280 to 300 (GDTFVANALNIVVLTAALSVY). Over 301–330 (NSCVYCNSRMLFGLAQQGNAPKALASVDKR) the chain is Cytoplasmic. The helical transmembrane segment at 331–351 (GVPVNTILVSALVTALCVLIN) threads the bilayer. Over 352-359 (YLAPESAF) the chain is Periplasmic. A helical membrane pass occupies residues 360–380 (GLLMALVVSALVINWAMISLA). The Cytoplasmic portion of the chain corresponds to 381–402 (HMKFRRAKQEQGVVTRFPALLY). Residues 403–423 (PLGNWICLLFMAAVLVIMLMT) form a helical membrane-spanning segment. Residues 424–426 (PGM) lie on the Periplasmic side of the membrane. A helical transmembrane segment spans residues 427 to 447 (AISVYLIPVWLIVLGIGYLFK). Residues 448 to 457 (EKTAKAVKAH) are Cytoplasmic-facing.

Belongs to the amino acid-polyamine-organocation (APC) superfamily. Amino acid transporter (AAT) (TC 2.A.3.1) family.

Its subcellular location is the cell inner membrane. The enzyme catalyses L-phenylalanine(in) + H(+)(in) = L-phenylalanine(out) + H(+)(out). It catalyses the reaction L-tryptophan(in) + H(+)(in) = L-tryptophan(out) + H(+)(out). The catalysed reaction is L-tyrosine(in) + H(+)(in) = L-tyrosine(out) + H(+)(out). Its activity is regulated as follows. Strong, mutual inhibition of uptake by tyrosine, phenylalanine, and tryptophan. Transport is also inhibited by the aromatic analogs p-fluorophenylalanine, beta-2-thienylalanine and 5-methyltryptophan. Its function is as follows. Permease that is involved in the active transport across the cytoplasmic membrane of all three aromatic amino acids, phenylalanine, tyrosine and tryptophan. The polypeptide is Aromatic amino acid transport protein AroP (Escherichia coli (strain K12)).